A 1149-amino-acid chain; its full sequence is Structural maintenance of chromosomes protein 6 homolog smc-6 (1149 aa).

ATP is bound at residue 77-84 (GPNGSGKS). Residues 309–460 (LQDETKKEYA…EEEKYTIQRD (152 aa)) are a coiled coil. Positions 461–687 (INQLRRKIEQ…DVDEGALARL (227 aa)) are flexible hinge. Positions 714–920 (YNERDQTKAA…AVDRATVGCD (207 aa)) form a coiled coil. Disordered stretches follow at residues 875 to 900 (NDKKNHPMPPGETDPPDLSSFPSTTE) and 1026 to 1060 (EVDEHSYDDDSDDSTGPRRKKSKKSGQKKKRVRDL). Residues 1026-1038 (EVDEHSYDDDSDD) are compositionally biased toward acidic residues. A compositionally biased stretch (basic residues) spans 1042 to 1058 (PRRKKSKKSGQKKKRVR).

Belongs to the SMC family. SMC6 subfamily. As to quaternary structure, interacts with smc-5. As to expression, expressed in the germline (at protein level).

The protein resides in the nucleus. It is found in the chromosome. Functionally, core component of the smc-5/smc-6 complex. Involved in DNA double-strand break repair by promoting sister-chromatid homologous recombination during meiosis. Also plays a role in the DNA damage repair of ultraviolet (UV) radiation-induced DNA lesions. Promotes efficient DNA replication. The chain is Structural maintenance of chromosomes protein 6 homolog smc-6 from Caenorhabditis elegans.